A 487-amino-acid chain; its full sequence is Bifunctional protein GlmU (487 aa).

The tract at residues 1–240 (MAEVTNCAAI…PEELSGVNDR (240 aa)) is pyrophosphorylase. UDP-N-acetyl-alpha-D-glucosamine contacts are provided by residues 12–15 (LAAG), Lys-26, Gln-83, and 88–89 (GT). Position 113 (Asp-113) interacts with Mg(2+). Positions 150, 165, 180, and 238 each coordinate UDP-N-acetyl-alpha-D-glucosamine. Asn-238 contacts Mg(2+). Residues 241 to 261 (VQLAAAGRLLNRRMVEEAMRG) are linker. The interval 262–487 (GTTIVDPDTT…DAKANDQTTN (226 aa)) is N-acetyltransferase. Residues Arg-343 and Lys-361 each contribute to the UDP-N-acetyl-alpha-D-glucosamine site. Catalysis depends on His-373, which acts as the Proton acceptor. UDP-N-acetyl-alpha-D-glucosamine-binding residues include Tyr-376 and Asn-387. Acetyl-CoA-binding positions include Ala-390, 396-397 (NY), Ser-415, and Ala-433. The interval 449–487 (SGGKQRNIEGWVQKKRPGTPAAEAAGKAQDAKANDQTTN) is disordered.

This sequence in the N-terminal section; belongs to the N-acetylglucosamine-1-phosphate uridyltransferase family. It in the C-terminal section; belongs to the transferase hexapeptide repeat family. As to quaternary structure, homotrimer. Mg(2+) serves as cofactor.

It localises to the cytoplasm. The catalysed reaction is alpha-D-glucosamine 1-phosphate + acetyl-CoA = N-acetyl-alpha-D-glucosamine 1-phosphate + CoA + H(+). It catalyses the reaction N-acetyl-alpha-D-glucosamine 1-phosphate + UTP + H(+) = UDP-N-acetyl-alpha-D-glucosamine + diphosphate. Its pathway is nucleotide-sugar biosynthesis; UDP-N-acetyl-alpha-D-glucosamine biosynthesis; N-acetyl-alpha-D-glucosamine 1-phosphate from alpha-D-glucosamine 6-phosphate (route II): step 2/2. It functions in the pathway nucleotide-sugar biosynthesis; UDP-N-acetyl-alpha-D-glucosamine biosynthesis; UDP-N-acetyl-alpha-D-glucosamine from N-acetyl-alpha-D-glucosamine 1-phosphate: step 1/1. It participates in bacterial outer membrane biogenesis; LPS lipid A biosynthesis. Its function is as follows. Catalyzes the last two sequential reactions in the de novo biosynthetic pathway for UDP-N-acetylglucosamine (UDP-GlcNAc). The C-terminal domain catalyzes the transfer of acetyl group from acetyl coenzyme A to glucosamine-1-phosphate (GlcN-1-P) to produce N-acetylglucosamine-1-phosphate (GlcNAc-1-P), which is converted into UDP-GlcNAc by the transfer of uridine 5-monophosphate (from uridine 5-triphosphate), a reaction catalyzed by the N-terminal domain. This Corynebacterium aurimucosum (strain ATCC 700975 / DSM 44827 / CIP 107346 / CN-1) (Corynebacterium nigricans) protein is Bifunctional protein GlmU.